The following is a 245-amino-acid chain: Bax inhibitor 1 (245 aa).

Residues M1 to H30 are Cytoplasmic-facing. The chain crosses the membrane as a helical span at residues L31–L51. Over Q52–D55 the chain is Lumenal. A helical transmembrane segment spans residues F56 to F76. The Cytoplasmic portion of the chain corresponds to Y77–L88. Residues G89 to I109 traverse the membrane as a helical segment. Topologically, residues C110–A115 are lumenal. Residues I116–L136 traverse the membrane as a helical segment. Topologically, residues L137–K142 are cytoplasmic. The chain crosses the membrane as a helical span at residues Y143–F163. Topologically, residues N164–S169 are lumenal. The chain crosses the membrane as a helical span at residues Y170–Y190. Residues D191–K245 are Cytoplasmic-facing.

This sequence belongs to the BI1 family.

Its subcellular location is the endoplasmic reticulum membrane. Functionally, suppressor of apoptosis. Modulates unfolded protein response signaling. Negatively regulates autophagy and autophagosome formation, especially during periods of nutrient deprivation, and reduces cell survival during starvation. This is Bax inhibitor 1 from Drosophila melanogaster (Fruit fly).